Consider the following 236-residue polypeptide: Phosphoribosylaminoimidazole-succinocarboxamide synthase (236 aa).

It belongs to the SAICAR synthetase family.

It carries out the reaction 5-amino-1-(5-phospho-D-ribosyl)imidazole-4-carboxylate + L-aspartate + ATP = (2S)-2-[5-amino-1-(5-phospho-beta-D-ribosyl)imidazole-4-carboxamido]succinate + ADP + phosphate + 2 H(+). The protein operates within purine metabolism; IMP biosynthesis via de novo pathway; 5-amino-1-(5-phospho-D-ribosyl)imidazole-4-carboxamide from 5-amino-1-(5-phospho-D-ribosyl)imidazole-4-carboxylate: step 1/2. The sequence is that of Phosphoribosylaminoimidazole-succinocarboxamide synthase from Hahella chejuensis (strain KCTC 2396).